The chain runs to 25 residues: Small ribosomal subunit protein eS32B (25 aa).

The segment at M1–K25 is disordered.

It belongs to the eukaryotic ribosomal protein eS32 family. In terms of assembly, component of the small ribosomal subunit (SSU). Mature yeast ribosomes consist of a small (40S) and a large (60S) subunit. The 40S small subunit contains 1 molecule of ribosomal RNA (18S rRNA) and 33 different proteins (encoded by 57 genes). The large 60S subunit contains 3 rRNA molecules (25S, 5.8S and 5S rRNA) and 46 different proteins (encoded by 81 genes).

The protein localises to the cytoplasm. Component of the ribosome, a large ribonucleoprotein complex responsible for the synthesis of proteins in the cell. The small ribosomal subunit (SSU) binds messenger RNAs (mRNAs) and translates the encoded message by selecting cognate aminoacyl-transfer RNA (tRNA) molecules. The large subunit (LSU) contains the ribosomal catalytic site termed the peptidyl transferase center (PTC), which catalyzes the formation of peptide bonds, thereby polymerizing the amino acids delivered by tRNAs into a polypeptide chain. The nascent polypeptides leave the ribosome through a tunnel in the LSU and interact with protein factors that function in enzymatic processing, targeting, and the membrane insertion of nascent chains at the exit of the ribosomal tunnel. In Saccharomyces cerevisiae (strain ATCC 204508 / S288c) (Baker's yeast), this protein is Small ribosomal subunit protein eS32B.